Reading from the N-terminus, the 238-residue chain is Keratin-associated protein 5-3 (238 aa).

Repeat copies occupy residues 35-38, 41-44, 47-50, 91-94, 150-153, 160-163, 170-173, 189-192, 199-202, 218-221, and 228-231. The interval 35–231 is 11 X 4 AA repeats of C-C-X-P; that stretch reads CCVPVCCCKP…CSSQSSCCVP (197 aa).

The protein belongs to the KRTAP type 5 family. Interacts with hair keratins. As to expression, restricted to hair root, not detected in any other tissues.

In the hair cortex, hair keratin intermediate filaments are embedded in an interfilamentous matrix, consisting of hair keratin-associated protein (KRTAP), which are essential for the formation of a rigid and resistant hair shaft through their extensive disulfide bond cross-linking with abundant cysteine residues of hair keratins. The matrix proteins include the high-sulfur and high-glycine-tyrosine keratins. The chain is Keratin-associated protein 5-3 (KRTAP5-3) from Homo sapiens (Human).